Reading from the N-terminus, the 388-residue chain is MNLHEYQAKQLFARYGLPAPVGYACTTPREAEEAASKIGAGPWVVKCQVHAGGRGKAGGVKVVNSKEDIRAFAENWLGKRLVTYQTDANGQPVNQILVEAATDIAKELYLGAVVDRSSRRVVFMASTEGGVEIEKVAEETPHLIHKVALDPLTGPMPYQGRELAFKLGLEGKLVQQFTKIFMGLATIFLERDLALIEINPLVITKQGDLICLDGKLGADGNALFRQPDLREMRDQSQEDPREAQAAQWELNYVALDGNIGCMVNGAGLAMGTMDIVKLHGGEPANFLDVGGGATKERVTEAFKIILSDDKVKAVLVNIFGGIVRCDLIADGIIGAVAEVGVNVPVVVRLEGNNAEVGAKKLADSGLNIIAAKGLTDAAQQVVAAVEGK.

Residues 9-244 (KQLFARYGLP…QSQEDPREAQ (236 aa)) form the ATP-grasp domain. ATP-binding positions include Lys46, 53–55 (GRG), Glu99, Thr102, and Glu107. Positions 199 and 213 each coordinate Mg(2+). Residues Asn264 and 321–323 (GIV) each bind substrate.

Belongs to the succinate/malate CoA ligase beta subunit family. Heterotetramer of two alpha and two beta subunits. Mg(2+) serves as cofactor.

The enzyme catalyses succinate + ATP + CoA = succinyl-CoA + ADP + phosphate. The catalysed reaction is GTP + succinate + CoA = succinyl-CoA + GDP + phosphate. It participates in carbohydrate metabolism; tricarboxylic acid cycle; succinate from succinyl-CoA (ligase route): step 1/1. Its function is as follows. Succinyl-CoA synthetase functions in the citric acid cycle (TCA), coupling the hydrolysis of succinyl-CoA to the synthesis of either ATP or GTP and thus represents the only step of substrate-level phosphorylation in the TCA. The beta subunit provides nucleotide specificity of the enzyme and binds the substrate succinate, while the binding sites for coenzyme A and phosphate are found in the alpha subunit. This chain is Succinate--CoA ligase [ADP-forming] subunit beta, found in Escherichia coli O8 (strain IAI1).